Reading from the N-terminus, the 205-residue chain is Probable inactive peroxygenase-like protein (205 aa).

A Proline-knot motif is present at residues 79-88; that stretch reads PVQLFGYILP. Serine 183 is subject to Phosphoserine.

It belongs to the caleosin family.

It localises to the lipid droplet. The polypeptide is Probable inactive peroxygenase-like protein (Arabidopsis thaliana (Mouse-ear cress)).